The chain runs to 227 residues: Peptidyl-tRNA hydrolase (227 aa).

Tyrosine 14 is a binding site for tRNA. Residue histidine 19 is the Proton acceptor of the active site. Positions 64, 66, and 112 each coordinate tRNA. The interval 182–227 (RIALLTQPPKPPKPPKPPKDGAKETAGKGTEAETAKPPGPAAGRTG) is disordered. The span at 198 to 215 (PPKDGAKETAGKGTEAET) shows a compositional bias: basic and acidic residues.

It belongs to the PTH family. As to quaternary structure, monomer.

It is found in the cytoplasm. It catalyses the reaction an N-acyl-L-alpha-aminoacyl-tRNA + H2O = an N-acyl-L-amino acid + a tRNA + H(+). Its function is as follows. Hydrolyzes ribosome-free peptidyl-tRNAs (with 1 or more amino acids incorporated), which drop off the ribosome during protein synthesis, or as a result of ribosome stalling. Functionally, catalyzes the release of premature peptidyl moieties from peptidyl-tRNA molecules trapped in stalled 50S ribosomal subunits, and thus maintains levels of free tRNAs and 50S ribosomes. This is Peptidyl-tRNA hydrolase from Rhodospirillum centenum (strain ATCC 51521 / SW).